The following is a 299-amino-acid chain: Class II hydrophobin C (299 aa).

The N-terminal stretch at 1–17 is a signal peptide; the sequence is MKFLTVAAAIFASTSLA. N-linked (GlcNAc...) asparagine glycans are attached at residues asparagine 39, asparagine 78, and asparagine 91. Disulfide bonds link cysteine 232-cysteine 281, cysteine 242-cysteine 272, cysteine 243-cysteine 255, and cysteine 282-cysteine 293.

Belongs to the cerato-ulmin hydrophobin family.

It localises to the secreted. Its subcellular location is the cell wall. The protein localises to the vacuole. It is found in the cytoplasmic vesicle. In terms of biological role, aerial growth, conidiation, and dispersal of filamentous fungi in the environment rely upon a capability of their secreting small amphipathic proteins called hydrophobins (HPBs) with low sequence identity. Class I can self-assemble into an outermost layer of rodlet bundles on aerial cell surfaces, conferring cellular hydrophobicity that supports fungal growth, development and dispersal; whereas Class II form highly ordered films at water-air interfaces through intermolecular interactions but contribute nothing to the rodlet structure. Hyd2C contributes to certain cell wall-related features, such as hydrophobicity but is not involved in cell wall-related events during fungal proliferation in host hemocoel. Does not contribute to conidial hydrophobicity. Involved actively in the asexual development. In Beauveria bassiana (strain ARSEF 2860) (White muscardine disease fungus), this protein is Class II hydrophobin C.